A 146-amino-acid polypeptide reads, in one-letter code: Hemoglobin subunit beta (146 aa).

Valine 1 is subject to N-acetylvaline. A Globin domain is found at 2–146 (HLTAEEKSLV…VANALAHKYH (145 aa)). Residue threonine 12 is modified to Phosphothreonine. Serine 44 is subject to Phosphoserine. Lysine 59 is subject to N6-acetyllysine. Histidine 63 contributes to the heme b binding site. An N6-acetyllysine modification is found at lysine 82. Histidine 92 contacts heme b. At cysteine 93 the chain carries S-nitrosocysteine. Lysine 144 is modified (N6-acetyllysine).

It belongs to the globin family. In terms of assembly, heterotetramer of two alpha chains and two beta chains. Red blood cells.

Functionally, involved in oxygen transport from the lung to the various peripheral tissues. The polypeptide is Hemoglobin subunit beta (HBB) (Vulpes vulpes (Red fox)).